Here is a 551-residue protein sequence, read N- to C-terminus: MVAHAEIKNLSFVYADENEKALQHISLSVQKGEFIALAGGSGSGKTTLLKHFKKELLPIGKRTGDTYYDGTLLENVPDLLSAQEIGMVFQNPENQLVMDTVIQELAFSLENIGLPSHIIQKRIAELISFLGFQDLLHQSVHTLSGGQKQLVNLAAVLVMQPKLLLLDEPTAQLDPIAAKEFLGLLKRINEELGITIVLSEHRLDEVIPLATRVICMNNGRIVYDGSPKTVVANMWEVEKFRPFIPQIPRLFLEWNAKDIPFTVREAQMKLNDFLAISYVSEPIVQSEKQEVILSAEHISFQYEKNNPLILRDLTVSIEKGKWVALVGKNGTGKSTLLTILAGLQKARRGKVKWNGKVIHKIDSKERFKSIGYVSQHPYYHFTFDTVWDEVYERARELYGEQGKEIAEHQLKKFWLYGLKERHPHDCSGGEQQLLALCTTLLSKPTLLLLDEPTKGLDPWKKERVGELFRKLQKEGTTIVMATHDIEFAAKYVDQCMMLFDGAVIMNDAPKEFFSGNFFYTTSINRFIRKELPYALTWEDVYEACQNDMLHS.

ABC transporter domains are found at residues 5-243 (AEIK…FRPF) and 293-525 (LSAE…SINR). ATP contacts are provided by residues 39–46 (GGSGSGKT) and 327–334 (GKNGTGKS).

This sequence belongs to the ABC transporter superfamily.

It is found in the cell membrane. In terms of biological role, probably part of an ABC transporter complex. Responsible for energy coupling to the transport system. This is Putative ABC transporter ATP-binding protein BA_3364/GBAA_3364/BAS3118 from Bacillus anthracis.